A 267-amino-acid polypeptide reads, in one-letter code: Lectin SfL-2 (267 aa).

Repeat copies occupy residues 1-67 (GRYT…RRGE), 68-135 (SNNY…QAEG), 136-202 (DTYN…LTGA), and 203-267 (NNYK…GVAN). Residues 1-267 (GRYTVQNQWG…GPIGFKGVAN (267 aa)) are 4 X approximate tandem repeats.

As to quaternary structure, monomer.

Functionally, lectin specific for high mannose N-glycans, recognizes the branched moiety of these glycans. Does not recognize other types of N-glycans or monosaccharides. The polypeptide is Lectin SfL-2 (Solieria filiformis (Red alga)).